Here is a 1079-residue protein sequence, read N- to C-terminus: MEDEAVLDRGASFLKHVCDEEEVEGHHTIYIGVHVPKSYRRRRRHKRKAGHKEKKEKERISENYSDKSDVENADESSSSILKPLISPAAERIRFILGEEDDSPAPPQLFTELDELLAVDGQEMEWKETARWIKFEEKVEQGGERWSKPHVATLSLHSLFELRTCMEKGSIMLDREASSLPQLVEMIADHQIETGLLKPDLKDKVTYTLLRKHRHQTKKSNLRSLADIGKTVSSASRMFSNPDNGSPAMTHRNLTSSSLNDISDKPEKDQLKNKFMKKLPRDAEASNVLVGEVDFLDTPFIAFVRLQQAVMLGALTEVPVPTRFLFILLGPKGKAKSYHEIGRAIATLMSDEVFHDIAYKAKDRHDLIAGIDEFLDEVIVLPPGEWDPTIRIEPPKSLPSSDKRKNMYSGGENVQMNGDTPHDGGHGGGGHGDCEELQRTGRFCGGLIKDIKRKAPFFASDFYDALNIQALSAILFIYLATVTNAITFGGLLGDATDNMQGVLESFLGTAVSGAIFCLFAGQPLTILSSTGPVLVFERLLFNFSKDHNFDYLEFRLWIGLWSAFMCLVLVATDASFLVQYFTRFTEEGFSSLISFIFIYDAFKKMIKLADYYPINSDFKVGYNTHFSCACLPPDPVNLSVSNDTTLAPEDLPTISSTDMYHNVTFDWAYLSKKECVKYGGKLVGNNCDFVPDITLMSFILFLGTYTSSMAMKKFKTSRYFPTTARKLISDFAIILSILIFCVIDALVGVDTPKLIVPSEFKPTSPNRGWFVPPFGGNPWWVCLAAAIPALLVTILIFMDQQITAVIVNRKEHKLKKGAGYHLDLFWVAILMVVCSFMALPWYVAATVISIAHIDSLKMETETSAPGEQPKFLGVREQRVTGTLVFILTGLSVFMAPILKFIPMPVLYGVFLYMGVASLNGVQFMDRLKLLLMPLKHQPDFIYLRHVPLRRVHLFTFLQVLCLALLWILKSTVAAIIFPVMILALVAVRKGMDYLFSQHDLSFLDDVIPEKDKKKKEDEKKKKKKKGSLDSDNDDSDCPYSEKVPSIKIPMDIMEQQPFLSDNKPLDRERSSTFLERHTSC.

The required for interaction with AHCYL1 stretch occupies residues 1 to 62 (MEDEAVLDRG…EKKEKERISE (62 aa)). Residues 1 to 466 (MEDEAVLDRG…FASDFYDALN (466 aa)) are Cytoplasmic-facing. Glutamate 21 is subject to Phosphoserine. Tyrosine 30 is modified (phosphotyrosine). Over residues 39-52 (YRRRRRHKRKAGHK) the composition is skewed to basic residues. The segment at 39–78 (YRRRRRHKRKAGHKEKKEKERISENYSDKSDVENADESSS) is disordered. Residues 53–70 (EKKEKERISENYSDKSDV) are compositionally biased toward basic and acidic residues. Phosphoserine occurs at positions 61, 65, 68, 223, 232, 233, and 245. The interval 235-266 (SRMFSNPDNGSPAMTHRNLTSSSLNDISDKPE) is disordered. Phosphothreonine occurs at positions 249 and 254. The span at 251 to 260 (RNLTSSSLND) shows a compositional bias: polar residues. A phosphoserine mark is found at serine 256, serine 257, and serine 262. The chain crosses the membrane as a helical span at residues 467 to 491 (IQALSAILFIYLATVTNAITFGGLL). Residues 492 to 501 (GDATDNMQGV) are Extracellular-facing. A helical membrane pass occupies residues 502 to 520 (LESFLGTAVSGAIFCLFAG). Position 521 (glutamine 521) is a topological domain, cytoplasmic. A discontinuously helical membrane pass occupies residues 522 to 542 (PLTILSSTGPVLVFERLLFNF). Residues 543 to 550 (SKDHNFDY) lie on the Extracellular side of the membrane. Residues 551 to 571 (LEFRLWIGLWSAFMCLVLVAT) form a helical membrane-spanning segment. The Cytoplasmic segment spans residues 572-585 (DASFLVQYFTRFTE). A helical transmembrane segment spans residues 586 to 609 (EGFSSLISFIFIYDAFKKMIKLAD). Topologically, residues 610-692 (YYPINSDFKV…GNNCDFVPDI (83 aa)) are extracellular. A helical transmembrane segment spans residues 693–710 (TLMSFILFLGTYTSSMAM). At 711–725 (KKFKTSRYFPTTARK) the chain is on the cytoplasmic side. A helical membrane pass occupies residues 726–745 (LISDFAIILSILIFCVIDAL). Topologically, residues 746-779 (VGVDTPKLIVPSEFKPTSPNRGWFVPPFGGNPWW) are extracellular. The tract at residues 748 to 779 (VDTPKLIVPSEFKPTSPNRGWFVPPFGGNPWW) is interaction with CA4. The chain crosses the membrane as a helical span at residues 780–807 (VCLAAAIPALLVTILIFMDQQITAVIVN). The Cytoplasmic segment spans residues 808–819 (RKEHKLKKGAGY). A helical transmembrane segment spans residues 820–836 (HLDLFWVAILMVVCSFM). Position 837 (alanine 837) is a topological domain, extracellular. Residues 838–855 (LPWYVAATVISIAHIDSL) traverse the membrane as a discontinuously helical segment. The Cytoplasmic portion of the chain corresponds to 856–877 (KMETETSAPGEQPKFLGVREQR). A helical membrane pass occupies residues 878–894 (VTGTLVFILTGLSVFMA). The Extracellular portion of the chain corresponds to 895-901 (PILKFIP). A helical membrane pass occupies residues 902 to 918 (MPVLYGVFLYMGVASLN). Topologically, residues 919–960 (GVQFMDRLKLLLMPLKHQPDFIYLRHVPLRRVHLFTFLQVLC) are cytoplasmic. Positions 961-986 (LALLWILKSTVAAIIFPVMILALVAV) form an intramembrane region, discontinuously helical. Residues 987 to 1079 (RKGMDYLFSQ…STFLERHTSC (93 aa)) lie on the Cytoplasmic side of the membrane. The interval 1002 to 1004 (LDD) is CA2-binding. A disordered region spans residues 1012 to 1079 (KKKEDEKKKK…STFLERHTSC (68 aa)). Residues serine 1026 and serine 1029 each carry the phosphoserine modification. A CA2-binding region spans residues 1030-1033 (DNDD). Phosphoserine is present on residues serine 1034 and serine 1044. Positions 1057–1059 (FLS) are required for basolateral targeting. Basic and acidic residues predominate over residues 1062–1079 (KPLDRERSSTFLERHTSC). A Phosphoserine modification is found at serine 1069.

The protein belongs to the anion exchanger (TC 2.A.31) family. As to quaternary structure, homodimer. Interacts with CA2/carbonic anhydrase 2 and CA4/carbonic anhydrase 4 which may regulate transporter activity. Isoform 1 but not isoform 2 interacts with AHCYL1 (via PEST domain when phosphorylated); the interaction increases SLC4A4 isoform 1 activity. Interacts with AHCYL2. Post-translationally, phosphorylation of Ser-1026 by PKA increases the binding of CA2 and changes the Na(+):HCO3(-) stoichiometry of the transporter from 3:1 to 2:1. Phosphorylated in presence of STK39 and dephosphorylated in presence of PP1 phosphatase; phosphorylation seems to inhibit SLC4A4 activity. N-glycosylated. May not be necessary for the transporter basic functions. In terms of tissue distribution, isoform 1 is specifically expressed in pancreatic ducts and acini. Also expressed in parotid acinar cells and in the colonic crypts.

It is found in the basolateral cell membrane. Its subcellular location is the cell membrane. The enzyme catalyses 2 hydrogencarbonate(out) + Na(+)(out) = 2 hydrogencarbonate(in) + Na(+)(in). The catalysed reaction is 3 hydrogencarbonate(out) + Na(+)(out) = 3 hydrogencarbonate(in) + Na(+)(in). Its activity is regulated as follows. Activated by cyclic AMP. In terms of biological role, electrogenic sodium/bicarbonate cotransporter with a Na(+):HCO3(-) stoichiometry varying from 1:2 to 1:3. May regulate bicarbonate influx/efflux at the basolateral membrane of cells and regulate intracellular pH. The protein is Electrogenic sodium bicarbonate cotransporter 1 (Slc4a4) of Mus musculus (Mouse).